The sequence spans 691 residues: Elongation factor G (691 aa).

Residues 8-283 (EDYRNFGIMA…AVVDYLPSPA (276 aa)) form the tr-type G domain. Residues 17-24 (AHIDAGKT), 81-85 (DTPGH), and 135-138 (NKMD) contribute to the GTP site.

This sequence belongs to the TRAFAC class translation factor GTPase superfamily. Classic translation factor GTPase family. EF-G/EF-2 subfamily.

The protein localises to the cytoplasm. Catalyzes the GTP-dependent ribosomal translocation step during translation elongation. During this step, the ribosome changes from the pre-translocational (PRE) to the post-translocational (POST) state as the newly formed A-site-bound peptidyl-tRNA and P-site-bound deacylated tRNA move to the P and E sites, respectively. Catalyzes the coordinated movement of the two tRNA molecules, the mRNA and conformational changes in the ribosome. This chain is Elongation factor G, found in Methylobacterium sp. (strain 4-46).